The primary structure comprises 115 residues: SPbeta prophage-derived uncharacterized membrane protein YosE (115 aa).

Helical transmembrane passes span I20–N42, V58–G78, and G95–I115.

The protein localises to the cell membrane. This chain is SPbeta prophage-derived uncharacterized membrane protein YosE (yosE), found in Bacillus subtilis (strain 168).